We begin with the raw amino-acid sequence, 299 residues long: Methionyl-tRNA formyltransferase (299 aa).

Position 109-112 (109-112 (SLLP)) interacts with (6S)-5,6,7,8-tetrahydrofolate.

This sequence belongs to the Fmt family.

It carries out the reaction L-methionyl-tRNA(fMet) + (6R)-10-formyltetrahydrofolate = N-formyl-L-methionyl-tRNA(fMet) + (6S)-5,6,7,8-tetrahydrofolate + H(+). In terms of biological role, attaches a formyl group to the free amino group of methionyl-tRNA(fMet). The formyl group appears to play a dual role in the initiator identity of N-formylmethionyl-tRNA by promoting its recognition by IF2 and preventing the misappropriation of this tRNA by the elongation apparatus. The chain is Methionyl-tRNA formyltransferase from Wolbachia sp. subsp. Drosophila simulans (strain wRi).